Reading from the N-terminus, the 399-residue chain is S-adenosylmethionine synthase (399 aa).

Histidine 17 contributes to the ATP binding site. Residue aspartate 19 coordinates Mg(2+). Glutamate 45 is a binding site for K(+). L-methionine is bound by residues glutamate 58 and glutamine 101. Positions 101–111 (QSPDIAQGVDK) are flexible loop. Residues 176 to 178 (DGK), 243 to 244 (RF), aspartate 252, 258 to 259 (RK), and lysine 279 contribute to the ATP site. Position 252 (aspartate 252) interacts with L-methionine. An L-methionine-binding site is contributed by lysine 283.

This sequence belongs to the AdoMet synthase family. As to quaternary structure, homotetramer; dimer of dimers. Mg(2+) is required as a cofactor. Requires K(+) as cofactor.

Its subcellular location is the cytoplasm. It carries out the reaction L-methionine + ATP + H2O = S-adenosyl-L-methionine + phosphate + diphosphate. It participates in amino-acid biosynthesis; S-adenosyl-L-methionine biosynthesis; S-adenosyl-L-methionine from L-methionine: step 1/1. Its function is as follows. Catalyzes the formation of S-adenosylmethionine (AdoMet) from methionine and ATP. The overall synthetic reaction is composed of two sequential steps, AdoMet formation and the subsequent tripolyphosphate hydrolysis which occurs prior to release of AdoMet from the enzyme. The chain is S-adenosylmethionine synthase from Staphylococcus epidermidis (strain ATCC 35984 / DSM 28319 / BCRC 17069 / CCUG 31568 / BM 3577 / RP62A).